The primary structure comprises 189 residues: Movement protein (189 aa).

Belongs to the tombusvirus/aureusvirus movement protein p22 family. Interacts with host protein HFI22. Phosphorylated.

It is found in the host membrane. In terms of biological role, transports viral genome to neighboring plant cells directly through plasmosdesmata, without any budding. The movement protein allows efficient cell to cell propagation, by bypassing the host cell wall barrier. The polypeptide is Movement protein (Capsicum annuum (Capsicum pepper)).